A 474-amino-acid polypeptide reads, in one-letter code: Transcription factor SOX-4 (474 aa).

The segment covering 1-10 (MVQQTNNAEN) has biased composition (polar residues). Positions 1-58 (MVQQTNNAENTEALLAGESSDSGAGLELGIASSPTPGSTASTGGKADDPSWCKTPSGH) are disordered. Over residues 31–44 (ASSPTPGSTASTGG) the composition is skewed to low complexity. The segment at residues 59–127 (IKRPMNAFMV…KHMADYPDYK (69 aa)) is a DNA-binding region (HMG box). Position 95 is an N6-acetyllysine (Lys-95). Disordered regions lie at residues 128 to 228 (YRPR…GGGK), 262 to 286 (ARTP…APGK), and 302 to 416 (LGTS…NFES). The segment covering 138–149 (NANSSSSAAASS) has biased composition (low complexity). Residues 158 to 189 (VGGSGGGGHGGGGGGGSSNAGGGGGGASGGGA) show a composition bias toward gly residues. Composition is skewed to low complexity over residues 266-283 (SASA…ALAA), 304-320 (TSSS…DPSD), 336-354 (APSL…AGRS), and 366-396 (AASP…GSSS). Positions 397 to 406 (SDDEFEDDLL) are enriched in acidic residues. Low complexity predominate over residues 407–416 (DLNPSSNFES). A 9aaTAD motif is present at residues 426–434 (SALDRDLDF).

As to quaternary structure, interacts with UBE2I. Interacts with HDAC1; interaction inhibits the transcriptional activator activity. In terms of processing, acetylation at Lys-95 by KAT5 promotes the transcription activator activity and is required during myoblast differentiation. Acetylation by KAT5 abolishes the interaction between SOX4 and HDAC1 and switches SOX4 into a transcriptional activator. In terms of tissue distribution, testis, brain, and heart.

It is found in the nucleus. In terms of biological role, transcriptional activator that binds with high affinity to the T-cell enhancer motif 5'-AACAAAG-3' motif. Required for IL17A-producing Vgamma2-positive gamma-delta T-cell maturation and development, via binding to regulator loci of RORC to modulate expression. Involved in skeletal myoblast differentiation by promoting gene expression of CALD1. The polypeptide is Transcription factor SOX-4 (Homo sapiens (Human)).